A 102-amino-acid polypeptide reads, in one-letter code: snRNA-activating protein complex subunit 5 (102 aa).

Polar residues predominate over residues 73-82; the sequence is QTTLKLSTRS. A disordered region spans residues 73–102; that stretch reads QTTLKLSTRSPMEEEEEEEEEEEEEEESDS. The span at 85–102 shows a compositional bias: acidic residues; that stretch reads EEEEEEEEEEEEEEESDS.

As to quaternary structure, part of the SNAPc complex composed of 5 subunits: SNAPC1, SNAPC2, SNAPC3, SNAPC4 and SNAPC5. SNAPC5 interacts with SNAPC4.

It localises to the nucleus. Its function is as follows. Part of the SNAPc complex required for the transcription of both RNA polymerase II and III small-nuclear RNA genes. Binds to the proximal sequence element (PSE), a non-TATA-box basal promoter element common to these 2 types of genes. Recruits TBP and BRF2 to the U6 snRNA TATA box. In Mus musculus (Mouse), this protein is snRNA-activating protein complex subunit 5.